The sequence spans 288 residues: MNAQLIDGKAVAARVRAEVKAEVDRLKLEHGLTPGLAVVRVGEDPASKVYVNGKKKAAEEVGFRSWELHPDEGITQAALLEVIHQLNADPAVHGILVQLPLPRHIDPDVIISAVKPEKDVDGFHPLNAGNLLLGRSTTRACTPYGVMRLLEEIGCDPAGKRAVVVGRSNIVGKPMALMLLQKNATVTICHSKSDLRREVEGADILVVAVGAAELVKGAWIKPGAVVIDVGMNRKPDGKLVGDVEFAAAAERASFITPVPGGVGPMTIAMLMRNTLDAAVRYGLVPVVR.

NADP(+) contacts are provided by residues 166-168 (GRS) and Ser191.

The protein belongs to the tetrahydrofolate dehydrogenase/cyclohydrolase family. As to quaternary structure, homodimer.

The enzyme catalyses (6R)-5,10-methylene-5,6,7,8-tetrahydrofolate + NADP(+) = (6R)-5,10-methenyltetrahydrofolate + NADPH. It carries out the reaction (6R)-5,10-methenyltetrahydrofolate + H2O = (6R)-10-formyltetrahydrofolate + H(+). It participates in one-carbon metabolism; tetrahydrofolate interconversion. In terms of biological role, catalyzes the oxidation of 5,10-methylenetetrahydrofolate to 5,10-methenyltetrahydrofolate and then the hydrolysis of 5,10-methenyltetrahydrofolate to 10-formyltetrahydrofolate. This chain is Bifunctional protein FolD 2, found in Myxococcus xanthus (strain DK1622).